The primary structure comprises 143 residues: MAKKIIGFIKLQIPAGKANPSPPVGPALGQRGLNIMEFCKAFNAQTQGMEPGLPVPVVITAFADKSFTFVMKSPPATVLIKKAAGVQKGSAKPHTDKVGKITRAQAEEIAKAKNADLTAADLDAAVRTIAGSARSMGITVEGL.

Belongs to the universal ribosomal protein uL11 family. In terms of assembly, part of the ribosomal stalk of the 50S ribosomal subunit. Interacts with L10 and the large rRNA to form the base of the stalk. L10 forms an elongated spine to which L12 dimers bind in a sequential fashion forming a multimeric L10(L12)X complex. Post-translationally, one or more lysine residues are methylated.

In terms of biological role, forms part of the ribosomal stalk which helps the ribosome interact with GTP-bound translation factors. The sequence is that of Large ribosomal subunit protein uL11 from Ralstonia nicotianae (strain ATCC BAA-1114 / GMI1000) (Ralstonia solanacearum).